Here is a 319-residue protein sequence, read N- to C-terminus: Transaldolase (319 aa).

Lys-125 (schiff-base intermediate with substrate) is an active-site residue.

Belongs to the transaldolase family. Type 1 subfamily. Homodimer.

It localises to the cytoplasm. The enzyme catalyses D-sedoheptulose 7-phosphate + D-glyceraldehyde 3-phosphate = D-erythrose 4-phosphate + beta-D-fructose 6-phosphate. It participates in carbohydrate degradation; pentose phosphate pathway; D-glyceraldehyde 3-phosphate and beta-D-fructose 6-phosphate from D-ribose 5-phosphate and D-xylulose 5-phosphate (non-oxidative stage): step 2/3. Transaldolase is important for the balance of metabolites in the pentose-phosphate pathway. This is Transaldolase from Ralstonia pickettii (strain 12J).